An 850-amino-acid polypeptide reads, in one-letter code: Tripartite terminase subunit 1 (850 aa).

The segment at Cys-191–His-219 adopts a C3H1-type zinc-finger fold. Residues Gly-438–Arg-489 are disordered. Low complexity predominate over residues Thr-439–Asn-457. A compositionally biased stretch (gly residues) spans Asn-458–Gly-481. Residue Tyr-709–Gln-716 participates in ATP binding. The segment at Trp-801–Leu-831 is disordered. Residues Arg-816–Arg-827 show a composition bias toward basic residues. The short motif at Arg-822–Arg-827 is the Nuclear localization signal element.

This sequence belongs to the herpesviridae TRM1 protein family. Associates with TRM2 and TRM3 to form the tripartite terminase complex. Interacts with portal protein.

It localises to the host nucleus. Its function is as follows. Component of the molecular motor that translocates viral genomic DNA in empty capsid during DNA packaging. Forms a tripartite terminase complex together with TRM2 and TRM3 in the host cytoplasm. Once the complex reaches the host nucleus, it interacts with the capsid portal vertex. This portal forms a ring in which genomic DNA is translocated into the capsid. TRM1 carries an endonuclease activity that plays an important role for the cleavage of concatemeric viral DNA into unit length genomes. The chain is Tripartite terminase subunit 1 from Homo sapiens (Human).